A 662-amino-acid polypeptide reads, in one-letter code: UvrABC system protein B (662 aa).

The region spanning 25–182 (KGIEKGEKFQ…KKLVEIQYER (158 aa)) is the Helicase ATP-binding domain. Residue 38 to 45 (GVTGSGKT) participates in ATP binding. Residues 91–114 (YYDYYQPEAYVAQSDTYIEKDASI) carry the Beta-hairpin motif. The Helicase C-terminal domain maps to 429–595 (QIDDLYTSIQ…TIIKDIREVI (167 aa)). The 36-residue stretch at 622–657 (DKLIEKYEEEMKEAAQNLQFEKAAHLRDVIYKLKRD) folds into the UVR domain.

This sequence belongs to the UvrB family. As to quaternary structure, forms a heterotetramer with UvrA during the search for lesions. Interacts with UvrC in an incision complex.

The protein localises to the cytoplasm. In terms of biological role, the UvrABC repair system catalyzes the recognition and processing of DNA lesions. A damage recognition complex composed of 2 UvrA and 2 UvrB subunits scans DNA for abnormalities. Upon binding of the UvrA(2)B(2) complex to a putative damaged site, the DNA wraps around one UvrB monomer. DNA wrap is dependent on ATP binding by UvrB and probably causes local melting of the DNA helix, facilitating insertion of UvrB beta-hairpin between the DNA strands. Then UvrB probes one DNA strand for the presence of a lesion. If a lesion is found the UvrA subunits dissociate and the UvrB-DNA preincision complex is formed. This complex is subsequently bound by UvrC and the second UvrB is released. If no lesion is found, the DNA wraps around the other UvrB subunit that will check the other stand for damage. This chain is UvrABC system protein B, found in Clostridium botulinum (strain Loch Maree / Type A3).